The primary structure comprises 37 residues: Large ribosomal subunit protein bL36 (37 aa).

Belongs to the bacterial ribosomal protein bL36 family.

The sequence is that of Large ribosomal subunit protein bL36 (rpmJ) from Mycoplasma sp.